The following is a 292-amino-acid chain: Light-independent protochlorophyllide reductase iron-sulfur ATP-binding protein (292 aa).

Residues 10 to 15 (GIGKST) and Lys39 each bind ATP. Ser14 contacts Mg(2+). A [4Fe-4S] cluster-binding site is contributed by Cys95. Position 182-183 (182-183 (NR)) interacts with ATP.

Belongs to the NifH/BchL/ChlL family. As to quaternary structure, homodimer. Protochlorophyllide reductase is composed of three subunits; ChlL, ChlN and ChlB. It depends on [4Fe-4S] cluster as a cofactor.

It localises to the plastid. Its subcellular location is the chloroplast. The enzyme catalyses chlorophyllide a + oxidized 2[4Fe-4S]-[ferredoxin] + 2 ADP + 2 phosphate = protochlorophyllide a + reduced 2[4Fe-4S]-[ferredoxin] + 2 ATP + 2 H2O. The protein operates within porphyrin-containing compound metabolism; chlorophyll biosynthesis (light-independent). In terms of biological role, component of the dark-operative protochlorophyllide reductase (DPOR) that uses Mg-ATP and reduced ferredoxin to reduce ring D of protochlorophyllide (Pchlide) to form chlorophyllide a (Chlide). This reaction is light-independent. The L component serves as a unique electron donor to the NB-component of the complex, and binds Mg-ATP. The polypeptide is Light-independent protochlorophyllide reductase iron-sulfur ATP-binding protein (Huperzia lucidula (Shining clubmoss)).